A 316-amino-acid chain; its full sequence is UDP-N-acetylenolpyruvoylglucosamine reductase (316 aa).

Positions 27–225 (VGGKAERFYR…KTAINALLKK (199 aa)) constitute an FAD-binding PCMH-type domain. Residue R190 is part of the active site. The active-site Proton donor is the S239. Residue E309 is part of the active site.

Belongs to the MurB family. It depends on FAD as a cofactor.

Its subcellular location is the cytoplasm. The enzyme catalyses UDP-N-acetyl-alpha-D-muramate + NADP(+) = UDP-N-acetyl-3-O-(1-carboxyvinyl)-alpha-D-glucosamine + NADPH + H(+). It participates in cell wall biogenesis; peptidoglycan biosynthesis. Cell wall formation. This is UDP-N-acetylenolpyruvoylglucosamine reductase from Coxiella burnetii (strain RSA 331 / Henzerling II).